Here is a 98-residue protein sequence, read N- to C-terminus: MHGRHVTLKDIVLDLQPPDPVGLHCYEQLVDSSEDEVDEVDGQDSQPLKQHFQIVTCCCGCDSNVRLVVQCTETDIREVQQLLLGTLNIVCPICAPKT.

The E7 terminal domain stretch occupies residues Met1 to Gly42. The short motif at Leu23 to Glu27 is the LXCXE motif; interaction with host RB1 and TMEM173/STING element. The segment at Cys58–Cys94 is a zinc-finger region. The Nuclear export signal motif lies at Ile76–Leu84.

Belongs to the papillomaviridae E7 protein family. In terms of assembly, homodimer. Homooligomer. Interacts with host RB1; this interaction induces dissociation of RB1-E2F1 complex thereby disrupting RB1 activity. Interacts with host EP300; this interaction represses EP300 transcriptional activity. Interacts with protein E2; this interaction inhibits E7 oncogenic activity. Interacts with host TMEM173/STING; this interaction impairs the ability of TMEM173/STING to sense cytosolic DNA and promote the production of type I interferon (IFN-alpha and IFN-beta). In terms of processing, highly phosphorylated.

The protein localises to the host cytoplasm. It is found in the host nucleus. In terms of biological role, plays a role in viral genome replication by driving entry of quiescent cells into the cell cycle. Stimulation of progression from G1 to S phase allows the virus to efficiently use the cellular DNA replicating machinery to achieve viral genome replication. E7 protein has both transforming and trans-activating activities. Induces the disassembly of the E2F1 transcription factor from RB1, with subsequent transcriptional activation of E2F1-regulated S-phase genes. Interferes with host histone deacetylation mediated by HDAC1 and HDAC2, leading to transcription activation. Also plays a role in the inhibition of both antiviral and antiproliferative functions of host interferon alpha. Interaction with host TMEM173/STING impairs the ability of TMEM173/STING to sense cytosolic DNA and promote the production of type I interferon (IFN-alpha and IFN-beta). The polypeptide is Protein E7 (Human papillomavirus type 6b).